Consider the following 422-residue polypeptide: Tyrosine--tRNA ligase (422 aa).

Residue tyrosine 35 participates in L-tyrosine binding. Residues 40-49 carry the 'HIGH' region motif; it reads PTAPSLHVGH. Residues tyrosine 170 and glutamine 174 each coordinate L-tyrosine. Residues 231-235 carry the 'KMSKS' region motif; that stretch reads KFGKT. Position 234 (lysine 234) interacts with ATP. An S4 RNA-binding domain is found at 353 to 419; the sequence is APVVDLFAEV…GKKNLAAVEI (67 aa).

It belongs to the class-I aminoacyl-tRNA synthetase family. TyrS type 1 subfamily. Homodimer.

The protein localises to the cytoplasm. The catalysed reaction is tRNA(Tyr) + L-tyrosine + ATP = L-tyrosyl-tRNA(Tyr) + AMP + diphosphate + H(+). Functionally, catalyzes the attachment of tyrosine to tRNA(Tyr) in a two-step reaction: tyrosine is first activated by ATP to form Tyr-AMP and then transferred to the acceptor end of tRNA(Tyr). In Streptomyces coelicolor (strain ATCC BAA-471 / A3(2) / M145), this protein is Tyrosine--tRNA ligase.